A 431-amino-acid polypeptide reads, in one-letter code: Saglin (431 aa).

The signal sequence occupies residues 1 to 39 (MSVRGYSGVQVISSRKHRSMSRLPTVLLLLASAAVLAAG). A glycan (N-linked (GlcNAc...) asparagine) is linked at asparagine 95. A coiled-coil region spans residues 120 to 169 (LDDAQRQMEQEHRQYAATLEEQLHAAQQETQQEQEMKKALQKQLDALTDS).

Homodimer; disulfide-linked. As to quaternary structure, (Microbial infection) Interacts with Plasmodium berghei TRAP (via integrin-like A-domain); the interaction probably promotes sporozoite invasion of salivary gland. Female saliva (at protein level). Female salivary gland (at protein level).

It localises to the secreted. In terms of biological role, (Microbial infection) Facilitates invasion of mosquito salivary glands by Plasmodium yoelii sporozoites. (Microbial infection) Facilitates invasion of mosquito salivary glands by Plasmodium falciparum sporozoites. Its function is as follows. (Microbial infection) Probably facilitates invasion of mosquito salivary glands by Plasmodium berghei sporozoites. The polypeptide is Saglin (Anopheles gambiae (African malaria mosquito)).